Reading from the N-terminus, the 452-residue chain is Phosphoglucosamine mutase (452 aa).

S109 functions as the Phosphoserine intermediate in the catalytic mechanism. S109, D248, D250, and D252 together coordinate Mg(2+). S109 is subject to Phosphoserine.

Belongs to the phosphohexose mutase family. The cofactor is Mg(2+). Post-translationally, activated by phosphorylation.

It carries out the reaction alpha-D-glucosamine 1-phosphate = D-glucosamine 6-phosphate. Its function is as follows. Catalyzes the conversion of glucosamine-6-phosphate to glucosamine-1-phosphate. The chain is Phosphoglucosamine mutase from Erythrobacter litoralis (strain HTCC2594).